The following is a 658-amino-acid chain: UvrABC system protein B (658 aa).

One can recognise a Helicase ATP-binding domain in the interval 26–413 (EGINSGKKKQ…SPEVIEQIIR (388 aa)). 39–46 (GATGTGKT) is a binding site for ATP. A Beta-hairpin motif is present at residues 92 to 115 (YYDYYQPEAYVPQTDTFIEKDAQI). The Helicase C-terminal domain maps to 430-596 (QIDDLLGEIQ…TIQKGVRDVI (167 aa)). Positions 622–657 (EKTIAKMEAEMKEAAKALDFERAAELRDLLLELKAE) constitute a UVR domain.

It belongs to the UvrB family. As to quaternary structure, forms a heterotetramer with UvrA during the search for lesions. Interacts with UvrC in an incision complex.

The protein resides in the cytoplasm. The UvrABC repair system catalyzes the recognition and processing of DNA lesions. A damage recognition complex composed of 2 UvrA and 2 UvrB subunits scans DNA for abnormalities. Upon binding of the UvrA(2)B(2) complex to a putative damaged site, the DNA wraps around one UvrB monomer. DNA wrap is dependent on ATP binding by UvrB and probably causes local melting of the DNA helix, facilitating insertion of UvrB beta-hairpin between the DNA strands. Then UvrB probes one DNA strand for the presence of a lesion. If a lesion is found the UvrA subunits dissociate and the UvrB-DNA preincision complex is formed. This complex is subsequently bound by UvrC and the second UvrB is released. If no lesion is found, the DNA wraps around the other UvrB subunit that will check the other stand for damage. This Bacillus cereus (strain ATCC 10987 / NRS 248) protein is UvrABC system protein B.